A 67-amino-acid chain; its full sequence is Large ribosomal subunit protein bL35 (67 aa).

This sequence belongs to the bacterial ribosomal protein bL35 family.

This chain is Large ribosomal subunit protein bL35, found in Brachyspira hyodysenteriae (strain ATCC 49526 / WA1).